A 304-amino-acid polypeptide reads, in one-letter code: MNPVNTKPYQLSADATWFVTGCSTGIGRAIASHVASQPGHRLIATARDPSSLSYLDDDNPAILKLAMDVTNPSSVNAAFKAAADYFGDKYYIDVVVNNAGYSLSGDTESVTEHEMHDEFETNFFGTVRVTLKAIEVMRQSKDHRGGLIFNISSLAGICAFPGHAFYHASKFAVEGWSESVAREMHPDWNIHFCIVEPSAVKTNFETTSKKRTQPHEAYAGADMPARQLETFVKKGLEAGVGFEPSAVANVLYKVASRNEKVPLRLPLSATAVKLITAKLQVQLQDLETVSELSAIDVHQVQFKV.

I26, T45, D68, and N98 together coordinate NADP(+). S152 (proton donor) is an active-site residue. NADP(+)-binding residues include Y166, K170, V200, and T202. Y166 functions as the Proton acceptor in the catalytic mechanism. K170 (lowers pKa of active site Tyr) is an active-site residue.

Belongs to the short-chain dehydrogenases/reductases (SDR) family.

The protein operates within secondary metabolite biosynthesis. Functionally, oxidoreductase; part of the gene cluster that mediates the biosynthesis of calbistrin A and related compounds. Calbistrin A is a secondary metabolite with an interesting structure that was recently found to have bioactivity against leukemia cells. It consists of two polyketides linked by an ester bond: a bicyclic decalin containing polyketide and a linear 12 carbon dioic acid structure. The polyketide synthase calA is probably responsible for forming the decalin moiety. Because calA lacks a designated enoylreductase (ER) domain, the required activity is provided by the trans-enoyl reductase calK. Following release from the PKS, calF then probably catalyzes the oxidation and the subsequent Diels Alder cycloisomerization that lead to the formation of the decalin moiety. The decalin polyketide backbone includes two C-methyl groups, at C7 and C11 in backbone, of which the C7 position is probably methylated by the methyltransferase domain of calA. A candidate for adding the methyl group at C11, if not done by CalA, is the cluster methyltransferase calH. Several additional tailoring enzymes within the cluster could be involved in the modification of the decalin polyketide product. Those include the 3 cytochrome P450 monooxygenases CalE, CalG and CalL, of which one might be responsible for the introduction of the extra hydroxyl group attached to the backbone of the decalin moiety, at position C9 in the backbone, that allows for attachment of the linear moiety. One tailoring enzyme activity that is expected to be involved in biosynthesis of calbistrin is an acyltransferase for connecting the two polyketide synthase products, and which could be performed by the cluster acyltransferase calJ. The enzyme responsible for the biosynthesis of the linear moiety, probably a second PKS, has not been identified yet. In Penicillium decumbens, this protein is Oxidoreductase calM.